A 192-amino-acid polypeptide reads, in one-letter code: Transcription termination/antitermination protein NusG (192 aa).

A KOW domain is found at 140-168 (VGEIVTVTDGPFETFMGTVEEIDQEKNRL).

Belongs to the NusG family.

Functionally, participates in transcription elongation, termination and antitermination. This is Transcription termination/antitermination protein NusG from Rickettsia conorii (strain ATCC VR-613 / Malish 7).